The primary structure comprises 595 residues: MSGHTVLVLYGSQTGTAQDTAERIGRQAQRRRLRVKVEALDTYNVVNLISESLVVFVCATTGQGDPPDNMKKFWRFLFRKSLPADSLSRLDCAVLGLGDSSYPKFNFVAKKLHKRLLQLGANMLLPVGLADDQHDLGPDGVIDPWLLSFWQKTLSLYPPPAGLAPLREEDKLPPRYIFHFLSEVPNKLTEHLQTVDNKSSPTPLRPFPAPLVFNQRVTHTAHFQDVRHIEFDITGSNIEFSAGDTVMMRPCNTSEDVEQLCQLLKLDPESYFTLTPTDSSTEVPARLPQPCSIRFLLEHFLDISAVPRRSFFELLATFATDELEQEKLLEFSSAAGQDTLHSYCNRPRRTALEVLTDFPHTTAELSIGRLLDLFPEIQPRSFSIASSLLEHPNRIQILLAVVKYKTMLVKPRKGLCSSWLASLDPSKGDVYVPLWVKKGSLKFPQDPESPVIMVGPGTGVAPFRSAIQERVAQGKMANVLFFGCRSESKDFYCGSEWQEKVQAGQMILVTAFSRDQEDKVYVQHRVKEQGKLLWDLIAKKNAFFYIAGNAKQMPTSVCDALKAVFQKEGGMSENQAQEMLDGMEKNGRFQSETWS.

Residues 6 to 150 (VLVLYGSQTG…VIDPWLLSFW (145 aa)) form the Flavodoxin-like domain. FMN-binding positions include 12–17 (SQTGTA), 59–62 (ATTG), 97–106 (LGDSSYPKFN), and aspartate 132. The region spanning 204–444 (LRPFPAPLVF…WVKKGSLKFP (241 aa)) is the FAD-binding FR-type domain. FAD is bound by residues arginine 348, 380–383 (RSFS), and 414–417 (GLCS). NADP(+) is bound by residues threonine 458, 513–514 (SR), and 519–523 (KVYVQ). Tryptophan 594 is a binding site for FAD.

It belongs to the NADPH-dependent diflavin oxidoreductase NDOR1 family. In the N-terminal section; belongs to the flavodoxin family. This sequence in the C-terminal section; belongs to the flavoprotein pyridine nucleotide cytochrome reductase family. In terms of assembly, interacts with ciapin1; as part of the cytosolic iron-sulfur (Fe-S) protein assembly (CIA) machinery. FAD is required as a cofactor. FMN serves as cofactor.

It is found in the cytoplasm. The protein resides in the perinuclear region. The catalysed reaction is 2 oxidized [2Fe-2S]-[protein] + NADPH = 2 reduced [2Fe-2S]-[protein] + NADP(+) + H(+). Functionally, NADPH-dependent reductase which is a central component of the cytosolic iron-sulfur (Fe-S) protein assembly (CIA) machinery. Transfers electrons from NADPH via its FAD and FMN prosthetic groups to the [2Fe-2S] cluster of ciapin1, another key component of the CIA machinery. In turn, this reduced cluster provides electrons for assembly of cytosolic iron-sulfur cluster proteins. It can also reduce the [2Fe-2S] cluster of cisd1 and activate this protein implicated in Fe/S cluster repair. The chain is NADPH-dependent diflavin oxidoreductase 1 from Danio rerio (Zebrafish).